A 406-amino-acid polypeptide reads, in one-letter code: 5-cytosine rRNA methyltransferase NSUN4 (406 aa).

S-adenosyl-L-methionine is bound by residues Gly207, Gly208, Lys209, Asp226, Arg231, Asp259, Gly260, and Asp277. The active-site Nucleophile is the Cys332.

It belongs to the class I-like SAM-binding methyltransferase superfamily. RsmB/NOP family.

The protein localises to the mitochondrion. The enzyme catalyses a cytidine in rRNA + S-adenosyl-L-methionine = a 5-methylcytidine in rRNA + S-adenosyl-L-homocysteine + H(+). It carries out the reaction a cytidine in mRNA + S-adenosyl-L-methionine = a 5-methylcytidine in mRNA + S-adenosyl-L-homocysteine + H(+). Functionally, mitochondrial RNA cytosine C(5)-methyltransferase that methylates cytosine to 5-methylcytosine (m5C) in various RNAs, such as rRNAs, mRNAs and some long non-coding RNAs (lncRNAs). Involved in mitochondrial ribosome small subunit (SSU) maturation by catalyzing methylation of mitochondrial 12S rRNA. This chain is 5-cytosine rRNA methyltransferase NSUN4 (nsun4), found in Xenopus laevis (African clawed frog).